The sequence spans 85 residues: MKLFLLLVISASMLIDGLVNADGYIRGSNGCKVSCLWGNEGCNKECKAFGAYYGYCWTWGLACWCQGLPDDKTWKSESNTCGGKK.

The first 21 residues, 1-21 (MKLFLLLVISASMLIDGLVNA), serve as a signal peptide directing secretion. Residues 22–82 (DGYIRGSNGC…TWKSESNTCG (61 aa)) enclose the LCN-type CS-alpha/beta domain. 4 disulfides stabilise this stretch: Cys-31/Cys-81, Cys-35/Cys-56, Cys-42/Cys-63, and Cys-46/Cys-65. Glycine amide is present on Gly-82.

In terms of tissue distribution, expressed by the venom gland.

It is found in the secreted. Its function is as follows. Depressant insect beta-toxins cause a transient contraction paralysis followed by a slow flaccid paralysis. They bind voltage-independently at site-4 of sodium channels (Nav) and shift the voltage of activation toward more negative potentials thereby affecting sodium channel activation and promoting spontaneous and repetitive firing. However, this toxin has some characteristics of excitatory toxins such as bursts of activity after the membrane has been hyperpolarized. This toxin is active only on insects. This Olivierus martensii (Manchurian scorpion) protein is Beta-insect depressant toxin BmKITb.